We begin with the raw amino-acid sequence, 576 residues long: Proline--tRNA ligase (576 aa).

Belongs to the class-II aminoacyl-tRNA synthetase family. ProS type 1 subfamily. Homodimer.

It localises to the cytoplasm. The enzyme catalyses tRNA(Pro) + L-proline + ATP = L-prolyl-tRNA(Pro) + AMP + diphosphate. Its function is as follows. Catalyzes the attachment of proline to tRNA(Pro) in a two-step reaction: proline is first activated by ATP to form Pro-AMP and then transferred to the acceptor end of tRNA(Pro). As ProRS can inadvertently accommodate and process non-cognate amino acids such as alanine and cysteine, to avoid such errors it has two additional distinct editing activities against alanine. One activity is designated as 'pretransfer' editing and involves the tRNA(Pro)-independent hydrolysis of activated Ala-AMP. The other activity is designated 'posttransfer' editing and involves deacylation of mischarged Ala-tRNA(Pro). The misacylated Cys-tRNA(Pro) is not edited by ProRS. The polypeptide is Proline--tRNA ligase (Bordetella parapertussis (strain 12822 / ATCC BAA-587 / NCTC 13253)).